A 258-amino-acid chain; its full sequence is Peroxisomal membrane protein 11B (258 aa).

The residue at position 43 (Lys-43) is an N6-acetyllysine. An interaction with PEX19, PEX11G and FIS1 and peroxisome targeting region spans residues 210–258 (VVRNACDLFIPLDKLGLWRCGPGIVGLCGLVSSILSILTLICPWLRLKP). Residues 232-254 (GIVGLCGLVSSILSILTLICPWL) traverse the membrane as a helical segment.

It belongs to the peroxin-11 family. Homodimer. Heterodimer with PEX11G. Interacts with PEX19. Interacts with FIS1.

The protein localises to the peroxisome membrane. In terms of biological role, involved in peroxisomal proliferation. May regulate peroxisome division by recruiting the dynamin-related GTPase DNM1L to the peroxisomal membrane. Promotes membrane protrusion and elongation on the peroxisomal surface. The protein is Peroxisomal membrane protein 11B (PEX11B) of Bos taurus (Bovine).